A 392-amino-acid polypeptide reads, in one-letter code: NAD(P)H-quinone oxidoreductase subunit H (392 aa).

This sequence belongs to the complex I 49 kDa subunit family. As to quaternary structure, NDH-1 can be composed of about 15 different subunits; different subcomplexes with different compositions have been identified which probably have different functions.

The protein localises to the cellular thylakoid membrane. It carries out the reaction a plastoquinone + NADH + (n+1) H(+)(in) = a plastoquinol + NAD(+) + n H(+)(out). The enzyme catalyses a plastoquinone + NADPH + (n+1) H(+)(in) = a plastoquinol + NADP(+) + n H(+)(out). Its function is as follows. NDH-1 shuttles electrons from an unknown electron donor, via FMN and iron-sulfur (Fe-S) centers, to quinones in the respiratory and/or the photosynthetic chain. The immediate electron acceptor for the enzyme in this species is believed to be plastoquinone. Couples the redox reaction to proton translocation, and thus conserves the redox energy in a proton gradient. Cyanobacterial NDH-1 also plays a role in inorganic carbon-concentration. The protein is NAD(P)H-quinone oxidoreductase subunit H of Synechococcus sp. (strain JA-2-3B'a(2-13)) (Cyanobacteria bacterium Yellowstone B-Prime).